The primary structure comprises 730 residues: UvrABC system protein C (730 aa).

The 80-residue stretch at 16–95 (AAPGVYKFRD…IKEFDPRFNV (80 aa)) folds into the GIY-YIG domain. The region spanning 208–243 (DKLVKDLEKRMQQASEDLDFETAARLRDDIGALRKA) is the UVR domain. The disordered stretch occupies residues 678–730 (ARALPAAVGDDELDKESESSVTSADAPSAESGSGDEGSESRELSMPTTGPSAQ).

It belongs to the UvrC family. As to quaternary structure, interacts with UvrB in an incision complex.

It localises to the cytoplasm. The UvrABC repair system catalyzes the recognition and processing of DNA lesions. UvrC both incises the 5' and 3' sides of the lesion. The N-terminal half is responsible for the 3' incision and the C-terminal half is responsible for the 5' incision. This chain is UvrABC system protein C, found in Rhodococcus erythropolis (strain PR4 / NBRC 100887).